Here is a 272-residue protein sequence, read N- to C-terminus: MYSLSPDLSFLSPMDVNHLSDENTAIEINNLCLNYGKTSALSNIEMRIPKGQVTAFIGPSGCGKSTLLRCINRMNDLVDNCKIKGSIKLFGDDIYHPDTDIPSLRRRVGMVFQRPNPFPKSIYENVVYGLRLQGIKEARVLDEAVEEALKAAALWDEVKHRLHENAFGLSGGQQQRLVIARAIAIEPEVLLLDEPTSALDPISTLTIEELIYELKSKYTVVIVTHNMQQAARVSDYTAFINQGKLVEYGNANTIFTSPIHKQTEDYITGRYG.

Residues 26-267 form the ABC transporter domain; that stretch reads IEINNLCLNY…PIHKQTEDYI (242 aa). An ATP-binding site is contributed by 58-65; that stretch reads GPSGCGKS.

The protein belongs to the ABC transporter superfamily. Phosphate importer (TC 3.A.1.7) family. The complex is composed of two ATP-binding proteins (PstB), two transmembrane proteins (PstC and PstA) and a solute-binding protein (PstS).

The protein resides in the cell inner membrane. It catalyses the reaction phosphate(out) + ATP + H2O = ADP + 2 phosphate(in) + H(+). Functionally, part of the ABC transporter complex PstSACB involved in phosphate import. Responsible for energy coupling to the transport system. This chain is Phosphate import ATP-binding protein PstB 2, found in Aliivibrio fischeri (strain ATCC 700601 / ES114) (Vibrio fischeri).